Here is a 351-residue protein sequence, read N- to C-terminus: Cytoplasmic dynein 2 light intermediate chain 1 (351 aa).

This sequence belongs to the dynein light intermediate chain family. Light intermediate chain of the cytoplasmic dynein complex 2, a multisubunit complex composed at least of eleven different proteins. The cytoplasmic dynein 2 complex consists of two catalytic heavy chains (HCs) and a number of non-catalytic subunits presented by intermediate chains (ICs), light intermediate chains (LICs) and light chains (LCs). Among them, a heavy chain (DYNC2H1), two intermediate chains (DYNC2I2 and DYNC2I1), a light intermediate chain (DYNC2LI1), and a light chain (DYNLT2B) are unique to the dynein-2 complex, but a subset of light chains are also shared by dynein-1 and dynein-2 complexes. Dynein-2 complex is built around two copies of cytoplasmic dynein 2 heavy chain 1 (DYNC2H1). The C-terminal region of DYNC2H1 forms the motor domain, which converts the energy from ATP hydrolysis into movement. Its N-terminal region forms the tail, an extended structure that binds the other subunits and holds the two heavy chains in a homodimer. Interacts with DYNC2H1 (via N-terminus); this interaction stabilizes the dynein-2 complex structure. As to expression, expressed in bone, brain, kidney, and cartilage. Lower expression in heart, liver, lung, placenta and thymus.

It is found in the golgi apparatus. The protein resides in the cytoplasm. Its subcellular location is the cell projection. The protein localises to the cilium. It localises to the cytoskeleton. It is found in the cilium basal body. The protein resides in the cilium axoneme. Its subcellular location is the microtubule organizing center. The protein localises to the centrosome. Its function is as follows. Acts as one of several non-catalytic accessory components of the cytoplasmic dynein 2 complex (dynein-2 complex), a motor protein complex that drives the movement of cargos along microtubules within cilia and flagella in concert with the intraflagellar transport (IFT) system, facilitating the assembly of these organelles. Involved in the regulation of ciliary length. This chain is Cytoplasmic dynein 2 light intermediate chain 1 (DYNC2LI1), found in Homo sapiens (Human).